The following is a 415-amino-acid chain: Alpha-1,3/1,6-mannosyltransferase ALG2 (415 aa).

Topologically, residues 1–84 (MAENLYRARS…LPRSLGWGGR (84 aa)) are cytoplasmic. An intramembrane region (helical) is located at residues 85-105 (GAAICSYVRMVFLALYVLFLS). Residues 106-415 (GEEFDVVVCD…QLYQYVTKLV (310 aa)) are Cytoplasmic-facing.

The protein belongs to the glycosyltransferase group 1 family. Glycosyltransferase 4 subfamily.

It localises to the endoplasmic reticulum membrane. It carries out the reaction a beta-D-Man-(1-&gt;4)-beta-D-GlcNAc-(1-&gt;4)-alpha-D-GlcNAc-diphospho-di-trans,poly-cis-dolichol + GDP-alpha-D-mannose = an alpha-D-Man-(1-&gt;3)-beta-D-Man-(1-&gt;4)-beta-D-GlcNAc-(1-&gt;4)-alpha-D-GlcNAc-diphospho-di-trans,poly-cis-dolichol + GDP + H(+). The enzyme catalyses an alpha-D-Man-(1-&gt;3)-beta-D-Man-(1-&gt;4)-beta-D-GlcNAc-(1-&gt;4)-alpha-D-GlcNAc-diphospho-di-trans,poly-cis-dolichol + GDP-alpha-D-mannose = an alpha-D-Man-(1-&gt;3)-[alpha-D-Man-(1-&gt;6)]-beta-D-Man-(1-&gt;4)-beta-D-GlcNAc-(1-&gt;4)-alpha-D-GlcNAc-diphospho-di-trans,poly-cis-dolichol + GDP + H(+). It catalyses the reaction a beta-D-Man-(1-&gt;4)-beta-D-GlcNAc-(1-&gt;4)-alpha-D-GlcNAc-diphospho-di-trans,poly-cis-dolichol + GDP-alpha-D-mannose = an alpha-D-Man-(1-&gt;6)-beta-D-Man-(1-&gt;4)-beta-D-GlcNAc-(1-&gt;4)-alpha-D-GlcNAc-diphospho-di-trans,poly-cis-dolichol + GDP + H(+). The catalysed reaction is an alpha-D-Man-(1-&gt;6)-beta-D-Man-(1-&gt;4)-beta-D-GlcNAc-(1-&gt;4)-alpha-D-GlcNAc-diphospho-di-trans,poly-cis-dolichol + GDP-alpha-D-mannose = an alpha-D-Man-(1-&gt;3)-[alpha-D-Man-(1-&gt;6)]-beta-D-Man-(1-&gt;4)-beta-D-GlcNAc-(1-&gt;4)-alpha-D-GlcNAc-diphospho-di-trans,poly-cis-dolichol + GDP + H(+). It functions in the pathway protein modification; protein glycosylation. Its function is as follows. Mannosyltransferase that operates in the biosynthetic pathway of dolichol-linked oligosaccharides, the glycan precursors employed in protein asparagine (N)-glycosylation. The assembly of dolichol-linked oligosaccharides begins on the cytosolic side of the endoplasmic reticulum membrane and finishes in its lumen. The sequential addition of sugars to dolichol pyrophosphate produces dolichol-linked oligosaccharides containing fourteen sugars, including two GlcNAcs, nine mannoses and three glucoses. Once assembled, the oligosaccharide is transferred from the lipid to nascent proteins by oligosaccharyltransferases. Catalyzes, on the cytoplasmic face of the endoplasmic reticulum, the addition of the second and third mannose residues to the dolichol-linked oligosaccharide chain, to produce Man3GlcNAc(2)-PP-dolichol core oligosaccharide. Man3GlcNAc(2)-PP-dolichol is a substrate for ALG11, the following enzyme in the biosynthetic pathway. While both alpha 1,3 and alpha 1,6 linkages are possible, the sequential addition of alpha 1,3 followed by alpha 1,6 is probably the preferred route. This chain is Alpha-1,3/1,6-mannosyltransferase ALG2 (Alg2), found in Mus musculus (Mouse).